The primary structure comprises 619 residues: DNA mismatch repair protein MutL (619 aa).

Over residues 364–375 the composition is skewed to low complexity; sequence EPASAREPAAPR. A disordered region spans residues 364-399; that stretch reads EPASAREPAAPRYSTSSGATGGRQPAASWPHAQPGY.

This sequence belongs to the DNA mismatch repair MutL/HexB family.

This protein is involved in the repair of mismatches in DNA. It is required for dam-dependent methyl-directed DNA mismatch repair. May act as a 'molecular matchmaker', a protein that promotes the formation of a stable complex between two or more DNA-binding proteins in an ATP-dependent manner without itself being part of a final effector complex. The chain is DNA mismatch repair protein MutL from Citrobacter koseri (strain ATCC BAA-895 / CDC 4225-83 / SGSC4696).